The chain runs to 102 residues: Small ribosomal subunit protein uS10 (102 aa).

A disordered region spans residues 35 to 58 (SGPIPLPTKTLEIPSRKSPDGEGT).

Belongs to the universal ribosomal protein uS10 family. As to quaternary structure, part of the 30S ribosomal subunit.

Its function is as follows. Involved in the binding of tRNA to the ribosomes. The protein is Small ribosomal subunit protein uS10 of Halorubrum lacusprofundi (strain ATCC 49239 / DSM 5036 / JCM 8891 / ACAM 34).